A 282-amino-acid chain; its full sequence is DegV domain-containing protein SPy_0865/M5005_Spy0672 (282 aa).

The DegV domain occupies 3-280 (LAVITDSTAT…EGAIAFGVTP (278 aa)). Residues threonine 61 and serine 94 each contribute to the hexadecanoate site.

Functionally, may bind long-chain fatty acids, such as palmitate, and may play a role in lipid transport or fatty acid metabolism. In Streptococcus pyogenes serotype M1, this protein is DegV domain-containing protein SPy_0865/M5005_Spy0672.